Consider the following 648-residue polypeptide: tRNA 5-methylaminomethyl-2-thiouridine biosynthesis bifunctional protein MnmC (648 aa).

The interval 1 to 228 (MTDRLVPASL…VDDLLVGEYA (228 aa)) is tRNA (mnm(5)s(2)U34)-methyltransferase. The segment at 252–648 (IGAGLAGCAV…LRARRVGRAG (397 aa)) is FAD-dependent cmnm(5)s(2)U34 oxidoreductase.

The protein in the N-terminal section; belongs to the methyltransferase superfamily. tRNA (mnm(5)s(2)U34)-methyltransferase family. This sequence in the C-terminal section; belongs to the DAO family. FAD is required as a cofactor.

It localises to the cytoplasm. The catalysed reaction is 5-aminomethyl-2-thiouridine(34) in tRNA + S-adenosyl-L-methionine = 5-methylaminomethyl-2-thiouridine(34) in tRNA + S-adenosyl-L-homocysteine + H(+). Its function is as follows. Catalyzes the last two steps in the biosynthesis of 5-methylaminomethyl-2-thiouridine (mnm(5)s(2)U) at the wobble position (U34) in tRNA. Catalyzes the FAD-dependent demodification of cmnm(5)s(2)U34 to nm(5)s(2)U34, followed by the transfer of a methyl group from S-adenosyl-L-methionine to nm(5)s(2)U34, to form mnm(5)s(2)U34. This chain is tRNA 5-methylaminomethyl-2-thiouridine biosynthesis bifunctional protein MnmC, found in Burkholderia lata (strain ATCC 17760 / DSM 23089 / LMG 22485 / NCIMB 9086 / R18194 / 383).